The following is a 211-amino-acid chain: Large ribosomal subunit protein bL17c (211 aa).

A chloroplast-targeting transit peptide spans 1–95 (MAIPMSMAMA…IVDGGGRIYA (95 aa)).

Belongs to the bacterial ribosomal protein bL17 family. As to quaternary structure, part of the 50S ribosomal subunit.

Its subcellular location is the plastid. The protein resides in the chloroplast. Functionally, this protein binds directly to 23S ribosomal RNA. This chain is Large ribosomal subunit protein bL17c (RPL17), found in Arabidopsis thaliana (Mouse-ear cress).